Reading from the N-terminus, the 495-residue chain is Serine/threonine-protein kinase STN8, chloroplastic (495 aa).

A chloroplast-targeting transit peptide spans 1–49; that stretch reads MASLLSPATPTATSAAFHSCSTAGFSTPTHISSQNSSLSLLSRRGCMMR. Residues 133–477 form the Protein kinase domain; that stretch reads FLVTEKLGEG…AAAALRHPYF (345 aa). ATP contacts are provided by residues 139-147 and Lys-186; that span reads LGEGSFGVV. The active-site Proton acceptor is Asp-308.

It belongs to the protein kinase superfamily. Ser/Thr protein kinase family.

It localises to the plastid. The protein resides in the chloroplast thylakoid. The catalysed reaction is L-seryl-[protein] + ATP = O-phospho-L-seryl-[protein] + ADP + H(+). The enzyme catalyses L-threonyl-[protein] + ATP = O-phospho-L-threonyl-[protein] + ADP + H(+). Functionally, light-dependent serine/threonine protein kinase that specifically phosphorylates N-terminal threonine residues in psbA/D1, psbD/D2, psbC/CP43 and psbH, which are components of the core antenna complex of photosystem II. Phosphorylation of PSII core components facilitates the exchange of chlorophyll proteins between the grana and the stroma lamellae. Also involved in the phosphorylation of the calcium-sensing receptor (CaS). The polypeptide is Serine/threonine-protein kinase STN8, chloroplastic (STN8) (Arabidopsis thaliana (Mouse-ear cress)).